The following is a 572-amino-acid chain: Formate--tetrahydrofolate ligase (572 aa).

81 to 88 lines the ATP pocket; that stretch reads TPAGEGKT.

The protein belongs to the formate--tetrahydrofolate ligase family.

The catalysed reaction is (6S)-5,6,7,8-tetrahydrofolate + formate + ATP = (6R)-10-formyltetrahydrofolate + ADP + phosphate. The protein operates within one-carbon metabolism; tetrahydrofolate interconversion. This is Formate--tetrahydrofolate ligase from Granulibacter bethesdensis (strain ATCC BAA-1260 / CGDNIH1).